Here is a 345-residue protein sequence, read N- to C-terminus: Beta-2-glycoprotein 1 (345 aa).

Positions methionine 1–alanine 19 are cleaved as a signal peptide. 4 Sushi domains span residues arginine 21–proline 81, arginine 82–arginine 139, isoleucine 140–glutamate 202, and valine 203–glutamate 262. 11 cysteine pairs are disulfide-bonded: cysteine 23-cysteine 66, cysteine 51-cysteine 79, cysteine 84-cysteine 124, cysteine 110-cysteine 137, cysteine 142-cysteine 188, cysteine 174-cysteine 200, cysteine 205-cysteine 248, cysteine 234-cysteine 260, cysteine 264-cysteine 315, cysteine 300-cysteine 325, and cysteine 307-cysteine 345. Residue threonine 33 is glycosylated (O-linked (GalNAc...) threonine). Asparagine 105, asparagine 117, asparagine 162, asparagine 183, and asparagine 193 each carry an N-linked (GlcNAc...) asparagine glycan. Residues serine 263 to cysteine 345 form a sushi-like region.

Expressed by the liver and secreted in plasma.

Its subcellular location is the secreted. In terms of biological role, binds to various kinds of negatively charged substances such as heparin, phospholipids, and dextran sulfate. May prevent activation of the intrinsic blood coagulation cascade by binding to phospholipids on the surface of damaged cells. The chain is Beta-2-glycoprotein 1 (Apoh) from Mus musculus (Mouse).